A 126-amino-acid polypeptide reads, in one-letter code: MKKDKKYQIEAIKNKDKTLFIVYATDIYSPSEFFSKIESDLKKKKSKGDVFFDLIIPNGGKKDRYVYTSFNGEKFSSYTLNKVTKTDEYNDLSELSASFFKKNFDKINVNLLSKATSFALKKGIPI.

Can form a complex with cognate toxin LsoA.

Its function is as follows. Antitoxin component of a type II toxin-antitoxin (TA) system. A labile antitoxin (half-life of 5.9 minutes) that inhibits the endonuclease activity of cognate toxin LsoA but not that of non-cognate toxin RnlA. This chain is Antitoxin LsoB (lsoB), found in Escherichia coli O157:H7.